Reading from the N-terminus, the 227-residue chain is 4-nitrobenzoate reductase (227 aa).

15-19 is an FMN binding site; sequence RRAVR. NAD(+)-binding residues include Ser-45, Tyr-102, and Ile-107. Arg-213 is a binding site for FMN.

This sequence belongs to the nitroreductase family. FMN is required as a cofactor.

It carries out the reaction 4-nitrobenzoate + 2 NADH + 2 H(+) = 4-hydroxylaminobenzoate + 2 NAD(+) + H2O. Its function is as follows. Nitroreductase involved in the degradation of nitroaromatic compounds. Catalyzes the conversion of 4-nitrobenzoate to 4-hydroxylaminobenzoate. Required for the catabolism of 4-nitrotoluene. This Pseudomonas putida (Arthrobacter siderocapsulatus) protein is 4-nitrobenzoate reductase.